Reading from the N-terminus, the 754-residue chain is Glutathione biosynthesis bifunctional protein GshAB (754 aa).

The segment at 1–332 (MTLNQLLQKL…QGHALNEKIA (332 aa)) is glutamate--cysteine ligase. One can recognise an ATP-grasp domain in the interval 488-746 (KKILADAGFP…ITTKILDKLF (259 aa)). Position 515 to 573 (515 to 573 (PLIKDKQIVVKPKSTNFGLGISIFQEPASLDNYQKALEIAFAEDTSVLVEEFIPGTEYR)) interacts with ATP. Positions 695, 716, and 718 each coordinate Mg(2+). Mn(2+) is bound by residues Asp-695, Glu-716, and Asn-718.

In the N-terminal section; belongs to the glutamate--cysteine ligase type 1 family. Type 2 subfamily. In terms of assembly, monomer. Mg(2+) is required as a cofactor. Mn(2+) serves as cofactor.

The catalysed reaction is L-cysteine + L-glutamate + ATP = gamma-L-glutamyl-L-cysteine + ADP + phosphate + H(+). The enzyme catalyses gamma-L-glutamyl-L-cysteine + glycine + ATP = glutathione + ADP + phosphate + H(+). Its pathway is sulfur metabolism; glutathione biosynthesis; glutathione from L-cysteine and L-glutamate: step 1/2. It participates in sulfur metabolism; glutathione biosynthesis; glutathione from L-cysteine and L-glutamate: step 2/2. Synthesizes glutathione from L-glutamate and L-cysteine via gamma-L-glutamyl-L-cysteine. This Streptococcus thermophilus (strain CNRZ 1066) protein is Glutathione biosynthesis bifunctional protein GshAB.